The primary structure comprises 2622 residues: Ankyrin-3 (2622 aa).

The disordered stretch occupies residues 1–44 (MAHAASQLKKNRDLEINAEEETEKKKKHRKRSRDRKKKSDANAS). Over residues 25–38 (KKKHRKRSRDRKKK) the composition is skewed to basic residues. A Phosphoserine modification is found at S39. ANK repeat units follow at residues 73–102 (NGLN…NVDA), 106–135 (KGNT…NVNA), 139–168 (NGFT…SQSL), 172–201 (DGFT…KGKV), 203–230 (LPAL…NADI), 242–271 (SGFT…AVDF), 275–304 (NDIT…KIDA), 308–337 (DGLT…PILS), 341–370 (NGLS…PVDD), 374–403 (DYLT…NPNA), 407–436 (NGFT…SIQA), 440–469 (SGLT…SPNT), 473–502 (RGET…QVEA), 506–535 (DDQT…SPNA), 539–568 (SGYT…SLSI), 572–601 (KGFT…SPDA), 605–634 (SGLT…SPHA), 638–667 (NGYT…DANA), 671–700 (QGIA…NVNL), 704–733 (SGLT…HVDA), 737–766 (MGYT…KVNA), 770–799 (NGYT…SPNE), and 803–832 (NGNT…EIMT). S631 bears the Phosphoserine mark. Phosphoserine occurs at positions 851, 855, 869, 875, 921, 924, 930, 965, 967, and 1121. The segment at 868-889 (LSDGEYISDGEEGEDAITGDTD) is disordered. Acidic residues predominate over residues 873-884 (YISDGEEGEDAI). 2 consecutive ZU5 domains span residues 992–1147 (FLVS…VVSR) and 1149–1296 (KQES…LADC). Residues S1458 and S1469 each carry the phosphoserine modification. Residues 1510 to 1539 (TPITVPGPAKSGSLSSSPSNTPSASPLKSI) are disordered. The segment covering 1515–1536 (PGPAKSGSLSSSPSNTPSASPL) has biased composition (low complexity). A phosphoserine mark is found at S1621, S1624, S1679, S1984, S2102, S2114, and S2117. 3 disordered regions span residues 1968–1992 (VESK…WTEF), 2099–2147 (ILES…FHEV), and 2292–2312 (SPDV…KDNQ). Positions 1977–1986 (PKSDKGHSPE) are enriched in basic and acidic residues. The span at 2106 to 2127 (FSQHDQDKSPLSDSGFETRSEK) shows a compositional bias: basic and acidic residues. Polar residues predominate over residues 2128-2137 (TPSAPQSAES). Positions 2336–2420 (TDIRMAIVAD…DIVTLLEGPI (85 aa)) constitute a Death domain. Phosphoserine is present on residues S2457, S2475, and S2544. Residues 2568 to 2622 (CVPVGMKKMTRTPADGKARLNLQEEEGSARSEPKQGEGYKVKTKKEIRNVEKKAH) form a disordered region. Residues 2594 to 2622 (GSARSEPKQGEGYKVKTKKEIRNVEKKAH) are compositionally biased toward basic and acidic residues.

In terms of assembly, may be a constituent of a NFASC/NRCAM/ankyrin G complex. Interacts with RHBG. Directly interacts with DMD and betaDAG1; this interaction does not interfere with DMD-binding and is required for DMD and betaDAG1 retention at costameres. Interacts (via N-terminal ANK repeats) with SCHIP1 isoform 7 (via C-terminus); this interaction is required for the localization at axon initial segments (AISs) and nodes of Ranvier (NRs). Interacts with PLEC and FLNC. Interacts (via ANK repeats) with IQCJ-SCHIP1; required for IQCJ-SCHIP1 localization at axon initial segments (AIS) and nodes of Ranvier. Interacts with SCHIP1. Interacts with KCNA1; this inhibits channel activity. Interacts with SCN5A. Interacts with PKP2 and GJA1/CX43. Interacts (via its C-terminal muscle-specific Obscurin/Titin-Binding-related domain sequence) with PLEC and FLNC. As to expression, expressed in the heart (at protein level). Expressed in skeletal muscle (at protein level). Expressed at highest levels in brain and testis, followed by skin, kidney, liver and spleen. May be specifically expressed in muscle tissues, including heart and skeletal muscle (extensor digitorum longus) (at protein level). In terms of tissue distribution, expressed in skeletal muscle, brain, lung, heart, testes and kidney.

It is found in the cytoplasm. Its subcellular location is the cytoskeleton. The protein resides in the cell projection. It localises to the axon. The protein localises to the cell membrane. It is found in the sarcolemma. Its subcellular location is the postsynaptic cell membrane. The protein resides in the lysosome. It localises to the T-tubule. Membrane-cytoskeleton linker. May participate in the maintenance/targeting of ion channels and cell adhesion molecules at the nodes of Ranvier and axonal initial segments. In skeletal muscle, required for costamere localization of DMD and betaDAG1. Regulates KCNA1 channel activity in function of dietary Mg(2+) levels, and thereby contributes to the regulation of renal Mg(2+) reabsorption. Required for intracellular adhesion and junctional conductance in myocytes, potentially via stabilization of GJA1/CX43 protein abundance and promotion of PKP2, GJA1/CX43, and SCN5A/Nav1.5 localization to cell-cell junctions. This is Ankyrin-3 (Ank3) from Rattus norvegicus (Rat).